We begin with the raw amino-acid sequence, 205 residues long: GTP cyclohydrolase-2 (205 aa).

Residue Arg-49–Glu-53 coordinates GTP. Cys-54, Cys-65, and Cys-67 together coordinate Zn(2+). Residues Gln-70, Glu-92 to Arg-94, and Thr-114 each bind GTP. Asp-126 acts as the Proton acceptor in catalysis. Arg-128 (nucleophile) is an active-site residue. GTP contacts are provided by Thr-149 and Lys-154.

The protein belongs to the GTP cyclohydrolase II family. It depends on Zn(2+) as a cofactor.

The enzyme catalyses GTP + 4 H2O = 2,5-diamino-6-hydroxy-4-(5-phosphoribosylamino)-pyrimidine + formate + 2 phosphate + 3 H(+). It functions in the pathway cofactor biosynthesis; riboflavin biosynthesis; 5-amino-6-(D-ribitylamino)uracil from GTP: step 1/4. Its function is as follows. Catalyzes the conversion of GTP to 2,5-diamino-6-ribosylamino-4(3H)-pyrimidinone 5'-phosphate (DARP), formate and pyrophosphate. In Pseudomonas putida (strain GB-1), this protein is GTP cyclohydrolase-2.